A 121-amino-acid chain; its full sequence is Putative iron-sulfur cluster insertion protein ErpA (121 aa).

Residues Cys-49, Cys-113, and Cys-115 each contribute to the iron-sulfur cluster site.

The protein belongs to the HesB/IscA family. Homodimer. Requires iron-sulfur cluster as cofactor.

Required for insertion of 4Fe-4S clusters. This Methylibium petroleiphilum (strain ATCC BAA-1232 / LMG 22953 / PM1) protein is Putative iron-sulfur cluster insertion protein ErpA.